The primary structure comprises 72 residues: Translation initiation factor IF-1 (72 aa).

The S1-like domain maps to 1–72 (MAKDDVIEVE…TRGRITYRFK (72 aa)).

Belongs to the IF-1 family. As to quaternary structure, component of the 30S ribosomal translation pre-initiation complex which assembles on the 30S ribosome in the order IF-2 and IF-3, IF-1 and N-formylmethionyl-tRNA(fMet); mRNA recruitment can occur at any time during PIC assembly.

Its subcellular location is the cytoplasm. In terms of biological role, one of the essential components for the initiation of protein synthesis. Stabilizes the binding of IF-2 and IF-3 on the 30S subunit to which N-formylmethionyl-tRNA(fMet) subsequently binds. Helps modulate mRNA selection, yielding the 30S pre-initiation complex (PIC). Upon addition of the 50S ribosomal subunit IF-1, IF-2 and IF-3 are released leaving the mature 70S translation initiation complex. In Streptococcus pneumoniae serotype 2 (strain D39 / NCTC 7466), this protein is Translation initiation factor IF-1.